We begin with the raw amino-acid sequence, 61 residues long: Large ribosomal subunit protein bL28 (61 aa).

Residues 1-26 (MAKDFVTGRKTTFGKKRSHALNQTNR) are disordered.

The protein belongs to the bacterial ribosomal protein bL28 family.

In Ligilactobacillus salivarius (strain UCC118) (Lactobacillus salivarius), this protein is Large ribosomal subunit protein bL28.